The sequence spans 590 residues: Phosphomethylpyrimidine synthase (590 aa).

Substrate contacts are provided by residues asparagine 197, methionine 226, tyrosine 255, histidine 291, 311–313, 352–355, and glutamate 391; these read SRG and DGLR. Position 395 (histidine 395) interacts with Zn(2+). Tyrosine 418 contributes to the substrate binding site. Residue histidine 459 coordinates Zn(2+). Cysteine 539, cysteine 542, and cysteine 547 together coordinate [4Fe-4S] cluster.

This sequence belongs to the ThiC family. The cofactor is [4Fe-4S] cluster.

The enzyme catalyses 5-amino-1-(5-phospho-beta-D-ribosyl)imidazole + S-adenosyl-L-methionine = 4-amino-2-methyl-5-(phosphooxymethyl)pyrimidine + CO + 5'-deoxyadenosine + formate + L-methionine + 3 H(+). The protein operates within cofactor biosynthesis; thiamine diphosphate biosynthesis. In terms of biological role, catalyzes the synthesis of the hydroxymethylpyrimidine phosphate (HMP-P) moiety of thiamine from aminoimidazole ribotide (AIR) in a radical S-adenosyl-L-methionine (SAM)-dependent reaction. The sequence is that of Phosphomethylpyrimidine synthase from Bacillus subtilis (strain 168).